Consider the following 401-residue polypeptide: Flagellin D (401 aa).

This sequence belongs to the bacterial flagellin family.

It is found in the secreted. The protein resides in the bacterial flagellum. In terms of biological role, flagellin is the subunit protein which polymerizes to form the filaments of bacterial flagella. In Rhizobium meliloti (strain 1021) (Ensifer meliloti), this protein is Flagellin D (flaD).